Here is a 246-residue protein sequence, read N- to C-terminus: Orotidine 5'-phosphate decarboxylase (246 aa).

Residues aspartate 22, lysine 44, 71-80 (DLKYHDIPHT), threonine 130, arginine 191, glutamine 201, glycine 221, and arginine 222 each bind substrate. Residue lysine 73 is the Proton donor of the active site.

The protein belongs to the OMP decarboxylase family. Type 1 subfamily. Homodimer.

The enzyme catalyses orotidine 5'-phosphate + H(+) = UMP + CO2. It participates in pyrimidine metabolism; UMP biosynthesis via de novo pathway; UMP from orotate: step 2/2. Functionally, catalyzes the decarboxylation of orotidine 5'-monophosphate (OMP) to uridine 5'-monophosphate (UMP). The polypeptide is Orotidine 5'-phosphate decarboxylase (Neisseria gonorrhoeae (strain ATCC 700825 / FA 1090)).